A 440-amino-acid polypeptide reads, in one-letter code: Streptokinase A (440 aa).

Positions 1–26 are cleaved as a signal peptide; sequence MKNYLSIGVIALLFALTFGTVKSVQA.

In terms of biological role, this protein is not a protease, but it activates plasminogen by complexing with it. As a potential virulence factor, it is thought to prevent the formation of effective fibrin barriers around the site of infection, thereby contributing to the invasiveness of the cells. This Streptococcus pyogenes serotype M1 protein is Streptokinase A (ska).